A 218-amino-acid polypeptide reads, in one-letter code: tRNA (guanine-N(7)-)-methyltransferase (218 aa).

Glu-45, Glu-70, Asp-97, and Asp-119 together coordinate S-adenosyl-L-methionine. The active site involves Asp-119. A substrate-binding site is contributed by Lys-123. Positions 125-130 (RHEKRR) are interaction with RNA. Residues Asp-155 and 195–198 (TEYE) contribute to the substrate site.

The protein belongs to the class I-like SAM-binding methyltransferase superfamily. TrmB family.

The enzyme catalyses guanosine(46) in tRNA + S-adenosyl-L-methionine = N(7)-methylguanosine(46) in tRNA + S-adenosyl-L-homocysteine. It participates in tRNA modification; N(7)-methylguanine-tRNA biosynthesis. Its function is as follows. Catalyzes the formation of N(7)-methylguanine at position 46 (m7G46) in tRNA. This is tRNA (guanine-N(7)-)-methyltransferase from Lactobacillus acidophilus (strain ATCC 700396 / NCK56 / N2 / NCFM).